A 369-amino-acid polypeptide reads, in one-letter code: UDP-glucose 4-epimerase 4 (369 aa).

19–50 (TVLVTGGAGYIGSHTVLQLLAAGFRVVVADSL) provides a ligand contact to NAD(+). S144 provides a ligand contact to substrate. Y168 functions as the Proton acceptor in the catalytic mechanism.

This sequence belongs to the NAD(P)-dependent epimerase/dehydratase family. Requires NAD(+) as cofactor.

It catalyses the reaction UDP-alpha-D-glucose = UDP-alpha-D-galactose. The protein operates within carbohydrate metabolism; galactose metabolism. In terms of biological role, catalyzes the interconversion between UDP-glucose and UDP-galactose. The chain is UDP-glucose 4-epimerase 4 (UGE-4) from Oryza sativa subsp. japonica (Rice).